A 346-amino-acid polypeptide reads, in one-letter code: MLVLGIESSCDETGLALYDTQRGLLAHALHSQIAMHREYGGVVPELASRDHIRRALPLLEEVMAQSGTRRDDIDAIAFTQGPGLAGALLVGASIANALALAWNKPTVGIHHLEGHLLSPLLVDQPPPFPFVALLVSGGHTQLMRVTDVGVYETLGETLDDAAGEAFDKTAKLIGLGYPGGPEVSKLAETGTPGAVVLPRPMLHSGDLDFSFSGLKTAVLTQMKKFEAAKLEGEALERAKADLARGFVDAAVDVLVAKSLAALKKTKLKRLVVAGGVGANRQLRAALSAAAAKRGFDVHYPDLALCTDNGAMIALAGALRLGRWPEQANADYAFTVKPRWDLASLAR.

Residues histidine 111 and histidine 115 each coordinate Fe cation. Substrate contacts are provided by residues 134–138 (LVSGG), aspartate 167, glycine 180, and asparagine 279. A Fe cation-binding site is contributed by aspartate 307.

The protein belongs to the KAE1 / TsaD family. The cofactor is Fe(2+).

It localises to the cytoplasm. The catalysed reaction is L-threonylcarbamoyladenylate + adenosine(37) in tRNA = N(6)-L-threonylcarbamoyladenosine(37) in tRNA + AMP + H(+). Its function is as follows. Required for the formation of a threonylcarbamoyl group on adenosine at position 37 (t(6)A37) in tRNAs that read codons beginning with adenine. Is involved in the transfer of the threonylcarbamoyl moiety of threonylcarbamoyl-AMP (TC-AMP) to the N6 group of A37, together with TsaE and TsaB. TsaD likely plays a direct catalytic role in this reaction. In Burkholderia lata (strain ATCC 17760 / DSM 23089 / LMG 22485 / NCIMB 9086 / R18194 / 383), this protein is tRNA N6-adenosine threonylcarbamoyltransferase.